We begin with the raw amino-acid sequence, 283 residues long: PTS system mannose-specific EIID component (283 aa).

Residue methionine 1 is modified to N-formylmethionine. At 1–14 (MVDTTQTTTEKKLT) the chain is on the cytoplasmic side. One can recognise a PTS EIID domain in the interval 11–281 (KKLTQSDIRG…GIAGYACGLL (271 aa)). An intramembrane segment occupies 15–52 (QSDIRGVFLRSNLFQGSWNFERMQALGFCFSMVPAIRR). Topologically, residues 53 to 59 (LYPENNE) are cytoplasmic. Residues 60–92 (ARKQAIRRHLEFFNTQPFVAAPILGVTLALEEQ) lie within the membrane without spanning it. Over 93–100 (RANGAEID) the chain is Cytoplasmic. Residues 101–140 (DGAINGIKVGLMGPLAGVGDPIFWGTVRPVFAALGAGIAM) are membrane-embedded. At 141–144 (SGSL) the chain is on the periplasmic side. A transmembrane helix spans residues 145-173 (LGPLLFFILFNLVRLATRYYGVAYGYSKG). Residues 174 to 183 (IDIVKDMGGG) lie on the Cytoplasmic side of the membrane. The chain crosses the lipid bilayer at residues 184–209 (FLQKLTEGASILGLFVMGALVNKWTH). Topologically, residues 210–241 (VNIPLVVSRITDQTGKEHVTTVQTILDQLMPG) are periplasmic. The chain crosses the lipid bilayer at residues 242 to 255 (LVPLLLTFACMWLL). At 256-261 (RKKVNP) the chain is on the cytoplasmic side. Over 262–280 (LWIIVGFFVIGIAGYACGL) the chain traverses the membrane. At 281–283 (LGL) the chain is on the periplasmic side.

As to quaternary structure, homotrimer of protomers that are composed of two subunits, IIC and IID.

Its subcellular location is the cell inner membrane. In terms of biological role, the phosphoenolpyruvate-dependent sugar phosphotransferase system (sugar PTS), a major carbohydrate active transport system, catalyzes the phosphorylation of incoming sugar substrates concomitantly with their translocation across the cell membrane. The enzyme II ManXYZ PTS system is involved in mannose transport. The polypeptide is PTS system mannose-specific EIID component (manZ) (Escherichia coli O157:H7).